A 146-amino-acid chain; its full sequence is Large ribosomal subunit protein uL15 (146 aa).

Positions 1-58 (MRLHELHPAPGSRPRATRVGRGIGSGLGKTSGRGHKGQKARSGGGVRRGFEGGQMPLT) are disordered. Positions 21–31 (RGIGSGLGKTS) are enriched in gly residues.

It belongs to the universal ribosomal protein uL15 family. As to quaternary structure, part of the 50S ribosomal subunit.

Binds to the 23S rRNA. This is Large ribosomal subunit protein uL15 from Moorella thermoacetica (strain ATCC 39073 / JCM 9320).